Reading from the N-terminus, the 169-residue chain is Peptide methionine sulfoxide reductase MsrA (169 aa).

C10 is a catalytic residue.

Belongs to the MsrA Met sulfoxide reductase family.

It carries out the reaction L-methionyl-[protein] + [thioredoxin]-disulfide + H2O = L-methionyl-(S)-S-oxide-[protein] + [thioredoxin]-dithiol. The enzyme catalyses [thioredoxin]-disulfide + L-methionine + H2O = L-methionine (S)-S-oxide + [thioredoxin]-dithiol. Functionally, has an important function as a repair enzyme for proteins that have been inactivated by oxidation. Catalyzes the reversible oxidation-reduction of methionine sulfoxide in proteins to methionine. The polypeptide is Peptide methionine sulfoxide reductase MsrA (Streptococcus equi subsp. zooepidemicus (strain H70)).